The chain runs to 83 residues: Heterin-1 (83 aa).

A signal peptide spans 1–22 (MNGKLLLVSLMVTMLVMQPAEA). The propeptide occupies 66–83 (VAGQIPFDEFMDILHYRP).

Belongs to the non-disulfide-bridged peptide (NDBP) superfamily. Long chain multifunctional peptide (group 2) family. In terms of tissue distribution, expressed by the venom gland.

It is found in the secreted. The protein resides in the target cell membrane. Functionally, amphipathic peptide with potent activities against both Gram-positive and Gram-negative bacteria. Is the most active against the two Gram-positive Bacillus megaterium and Micrococcus luteus (MIC=4.0 uM for both). It has relatively low hemolytic activity against human erythrocytes. The chain is Heterin-1 from Heterometrus spinifer (Asia giant forest scorpion).